Here is a 467-residue protein sequence, read N- to C-terminus: Methylenetetrahydrofolate--tRNA-(uracil-5-)-methyltransferase TrmFO (467 aa).

10-15 (GAGLAG) is an FAD binding site.

Belongs to the MnmG family. TrmFO subfamily. FAD serves as cofactor.

Its subcellular location is the cytoplasm. The catalysed reaction is uridine(54) in tRNA + (6R)-5,10-methylene-5,6,7,8-tetrahydrofolate + NADH + H(+) = 5-methyluridine(54) in tRNA + (6S)-5,6,7,8-tetrahydrofolate + NAD(+). It carries out the reaction uridine(54) in tRNA + (6R)-5,10-methylene-5,6,7,8-tetrahydrofolate + NADPH + H(+) = 5-methyluridine(54) in tRNA + (6S)-5,6,7,8-tetrahydrofolate + NADP(+). Its function is as follows. Catalyzes the folate-dependent formation of 5-methyl-uridine at position 54 (M-5-U54) in all tRNAs. This is Methylenetetrahydrofolate--tRNA-(uracil-5-)-methyltransferase TrmFO from Prochlorococcus marinus (strain MIT 9515).